A 242-amino-acid chain; its full sequence is Ribonuclease PH (242 aa).

Residues arginine 90 and 128–130 (GTR) contribute to the phosphate site.

It belongs to the RNase PH family. Homohexameric ring arranged as a trimer of dimers.

It catalyses the reaction tRNA(n+1) + phosphate = tRNA(n) + a ribonucleoside 5'-diphosphate. Functionally, phosphorolytic 3'-5' exoribonuclease that plays an important role in tRNA 3'-end maturation. Removes nucleotide residues following the 3'-CCA terminus of tRNAs; can also add nucleotides to the ends of RNA molecules by using nucleoside diphosphates as substrates, but this may not be physiologically important. Probably plays a role in initiation of 16S rRNA degradation (leading to ribosome degradation) during starvation. The polypeptide is Ribonuclease PH (Nocardioides sp. (strain ATCC BAA-499 / JS614)).